The primary structure comprises 733 residues: Folic acid synthesis protein fol1 (733 aa).

DHNA stretches follow at residues 55–167 (VVVE…YAER) and 179–277 (IEFS…QIYR). Tyrosine 281 bears the Phosphotyrosine mark. An HPK region spans residues 295 to 454 (NKIAYLSFGS…LPSQGIRLYS (160 aa)). Positions 465 to 724 (ALTMGILNVT…DTKEMSKVVG (260 aa)) constitute a Pterin-binding domain. The segment at 467 to 733 (TMGILNVTPD…GMANAIRYVP (267 aa)) is DHPS. Residue asparagine 472 participates in Mg(2+) binding. Residues threonine 511, aspartate 546, asparagine 565, aspartate 637, lysine 677, and 712–714 (RVH) each bind (7,8-dihydropterin-6-yl)methyl diphosphate.

In the N-terminal section; belongs to the DHNA family. The protein in the central section; belongs to the HPPK family. This sequence in the C-terminal section; belongs to the DHPS family. Mg(2+) serves as cofactor.

The protein resides in the cytoplasm. It catalyses the reaction 7,8-dihydroneopterin = 6-hydroxymethyl-7,8-dihydropterin + glycolaldehyde. The enzyme catalyses 6-hydroxymethyl-7,8-dihydropterin + ATP = (7,8-dihydropterin-6-yl)methyl diphosphate + AMP + H(+). The catalysed reaction is (7,8-dihydropterin-6-yl)methyl diphosphate + 4-aminobenzoate = 7,8-dihydropteroate + diphosphate. It participates in cofactor biosynthesis; tetrahydrofolate biosynthesis; 2-amino-4-hydroxy-6-hydroxymethyl-7,8-dihydropteridine diphosphate from 7,8-dihydroneopterin triphosphate: step 3/4. The protein operates within cofactor biosynthesis; tetrahydrofolate biosynthesis; 2-amino-4-hydroxy-6-hydroxymethyl-7,8-dihydropteridine diphosphate from 7,8-dihydroneopterin triphosphate: step 4/4. It functions in the pathway cofactor biosynthesis; tetrahydrofolate biosynthesis; 7,8-dihydrofolate from 2-amino-4-hydroxy-6-hydroxymethyl-7,8-dihydropteridine diphosphate and 4-aminobenzoate: step 1/2. Catalyzes three sequential steps of tetrahydrofolate biosynthesis. The sequence is that of Folic acid synthesis protein fol1 (fol1) from Schizosaccharomyces pombe (strain 972 / ATCC 24843) (Fission yeast).